Here is a 390-residue protein sequence, read N- to C-terminus: S-adenosylmethionine synthase (390 aa).

Position 17 (His-17) interacts with ATP. Asp-19 is a binding site for Mg(2+). Glu-45 contributes to the K(+) binding site. Residues Glu-58 and Gln-101 each contribute to the L-methionine site. A flexible loop region spans residues 101 to 111 (QSPDIGQGVDT). ATP is bound by residues 160–162 (DGK), 226–227 (RF), Asp-235, 241–242 (RK), Ala-258, and Lys-262. Asp-235 contributes to the L-methionine binding site. Lys-266 contributes to the L-methionine binding site.

It belongs to the AdoMet synthase family. In terms of assembly, homotetramer; dimer of dimers. Mg(2+) serves as cofactor. The cofactor is K(+).

It localises to the cytoplasm. It catalyses the reaction L-methionine + ATP + H2O = S-adenosyl-L-methionine + phosphate + diphosphate. It participates in amino-acid biosynthesis; S-adenosyl-L-methionine biosynthesis; S-adenosyl-L-methionine from L-methionine: step 1/1. In terms of biological role, catalyzes the formation of S-adenosylmethionine (AdoMet) from methionine and ATP. The overall synthetic reaction is composed of two sequential steps, AdoMet formation and the subsequent tripolyphosphate hydrolysis which occurs prior to release of AdoMet from the enzyme. This chain is S-adenosylmethionine synthase, found in Anaeromyxobacter dehalogenans (strain 2CP-1 / ATCC BAA-258).